Reading from the N-terminus, the 217-residue chain is U exon protein (217 aa).

2 disordered regions span residues 68–110 and 170–217; these read SKIF…TNHG and EKEA…RQGR. Polar residues predominate over residues 202-217; the sequence is GGFQQPTGANQARQGR.

The protein belongs to the adenoviridae U exon protein family.

The protein resides in the host nucleus. The protein localises to the host nucleoplasm. Its subcellular location is the host nucleolus. In terms of biological role, might play a role in viral replication since it is associated with viral replication centers. Seems to have an effect on DBP localization. This is U exon protein from Homo sapiens (Human).